Consider the following 359-residue polypeptide: Oxopyrrolidines biosynthesis cluster protein G (359 aa).

Residues 1–32 (MDHLRDSLLSSLPRDSPSIGAMDYARRDREST) are disordered. Low complexity predominate over residues 7 to 18 (SLLSSLPRDSPS).

Its function is as follows. Part of the gene cluster that mediates the biosynthesis of oxopyrrolidines, polyketide-amino acid hybrid compounds with feature structures of tetramic acid. Does not seem to play a role in oxopyrrolidines A and B biosynthesis. The sequence is that of Oxopyrrolidines biosynthesis cluster protein G from Penicillium oxalicum (strain 114-2 / CGMCC 5302) (Penicillium decumbens).